A 150-amino-acid polypeptide reads, in one-letter code: HTH-type transcriptional regulator LrpA (150 aa).

In terms of domain architecture, HTH asnC-type spans 5 to 66 (LDDIDRILVR…RINPEAVGHL (62 aa)). The segment at residues 24–43 (LSELATRAGLSVSAVQSRVR) is a DNA-binding region (H-T-H motif). L-phenylalanine-binding residues include V100, G102, and E104.

Homohexadecamer in the absence of any added ligand. Homooctamer. Tetramer of dimers. In the presence of phenylalanine, the hexadecamer dissociates into an octamer, which further dissociates partially into lower-order oligomers.

Its activity is regulated as follows. The DNA-binding activity of LrpA is modulated by interaction of LrpA with various effector molecules, including amino acids and vitamins. The DNA binding affinity is decreased by several amino acids, including phenylalanine, tyrosine, tryptophan, histidine, leucine and aspartate. Preferentially binds to aromatic amino acids. Besides amino acids, the binding affinity is also reduced by vitamins, including B1, B3, B6, VC, B7, B9, B12, VA and VK3. Transcriptional regulator that probably plays an important role in M.tuberculosis persistence. Regulates the expression of several genes, including lat, rsmG, whiB2, lsr2 and Rv2011c. Acts by binding directly to the promoter region of the target genes. The polypeptide is HTH-type transcriptional regulator LrpA (Mycobacterium tuberculosis (strain ATCC 25618 / H37Rv)).